Reading from the N-terminus, the 387-residue chain is uncharacterized protein (387 aa).

The N-terminal stretch at 1 to 27 is a signal peptide; the sequence is MKKWMITIAMLILAGIALFVFISPLKS.

This is an uncharacterized protein from Bacillus subtilis (strain 168).